Reading from the N-terminus, the 72-residue chain is SRY-related protein AES4 (72 aa).

A DNA-binding region (HMG box) is located at residues 1 to 69 (VKRPMNAFMV…KHMADYPDYK (69 aa)).

The protein resides in the nucleus. The polypeptide is SRY-related protein AES4 (Alligator mississippiensis (American alligator)).